The following is a 1023-amino-acid chain: 2-oxoglutarate dehydrogenase complex component E1 (1023 aa).

The transit peptide at 1–40 directs the protein to the mitochondrion; sequence MFHLRTCAAKLRPLTASQTVKTFSQNRPAAARTFGQIRCY. The residue at position 74 (Lys74) is an N6-succinyllysine. Ser100 carries the post-translational modification Phosphoserine. Ca(2+)-binding residues include His143, Asp156, and Asp158. Position 312 (Arg312) interacts with thiamine diphosphate. Lys401 is modified (N6-acetyllysine). Residues Asp411, Asn444, and Ile446 each contribute to the thiamine diphosphate site. 3 residues coordinate Mg(2+): Asp411, Asn444, and Ile446. Lys534 participates in a covalent cross-link: Glycyl lysine isopeptide (Lys-Gly) (interchain with G-Cter in ubiquitin). N6-succinyllysine is present on Lys564. Residue Gln676 participates in thiamine diphosphate binding. Lys970 bears the N6-acetyllysine mark.

This sequence belongs to the alpha-ketoglutarate dehydrogenase family. In terms of assembly, homodimer. The 2-oxoglutarate dehydrogenase complex is composed of OGDH (2-oxoglutarate dehydrogenase; E1), DLST (dihydrolipoamide succinyltransferase; E2), DLD (dihydrolipoamide dehydrogenase; E3) and the assembly factor KGD4. It contains multiple copies of the three enzymatic components (E1, E2 and E3). In the nucleus, the 2-oxoglutarate dehydrogenase complex associates with KAT2A. Interacts with ABHD11; this interaction maintains the functional lipoylation of the 2-oxoglutarate dehydrogenase complex. The cofactor is thiamine diphosphate. Mg(2+) serves as cofactor.

Its subcellular location is the mitochondrion. The protein resides in the nucleus. It catalyses the reaction N(6)-[(R)-lipoyl]-L-lysyl-[protein] + 2-oxoglutarate + H(+) = N(6)-[(R)-S(8)-succinyldihydrolipoyl]-L-lysyl-[protein] + CO2. Its activity is regulated as follows. Calcium ions and ADP stimulate, whereas ATP and NADH reduce catalytic activity. 2-oxoglutarate dehydrogenase (E1o) component of the 2-oxoglutarate dehydrogenase complex (OGDHC). Participates in the first step, rate limiting for the overall conversion of 2-oxoglutarate to succinyl-CoA and CO(2) catalyzed by the whole OGDHC. Catalyzes the irreversible decarboxylation of 2-oxoglutarate (alpha-ketoglutarate) via the thiamine diphosphate (ThDP) cofactor and subsequent transfer of the decarboxylated acyl intermediate on an oxidized dihydrolipoyl group that is covalently amidated to the E2 enzyme (dihydrolipoyllysine-residue succinyltransferase or DLST). Plays a key role in the Krebs (citric acid) cycle, which is a common pathway for oxidation of fuel molecules, including carbohydrates, fatty acids, and amino acids. Can catalyze the decarboxylation of 2-oxoadipate in vitro, but at a much lower rate than 2-oxoglutarate. Mainly active in the mitochondrion. A fraction of the 2-oxoglutarate dehydrogenase complex also localizes in the nucleus and is required for lysine succinylation of histones: associates with KAT2A on chromatin and provides succinyl-CoA to histone succinyltransferase KAT2A. The polypeptide is 2-oxoglutarate dehydrogenase complex component E1 (Bos taurus (Bovine)).